A 721-amino-acid polypeptide reads, in one-letter code: Protein mu-NS (721 aa).

The interaction with sigma-NS stretch occupies residues 1-13; sequence MASFKGFSANTVP. The RNA-binding stretch occupies residues 1–38; sequence MASFKGFSANTVPVSKTRKDTSSLTATPGLRAPSMSSP. The segment at 14–40 is interaction with mu-2; sequence VSKTRKDTSSLTATPGLRAPSMSSPVD. Residues 17–37 are disordered; sequence TRKDTSSLTATPGLRAPSMSS. The tract at residues 471-721 is involved in the formation of factory-like inclusions; the sequence is QSDTVDGIKL…IDFSVPADEL (251 aa). 2 coiled-coil regions span residues 523–556 and 632–686; these read LLSQ…ADVK and KQAH…NQRQ.

The protein belongs to the orthoreovirus mu-NS protein family. As to quaternary structure, interacts with mu-2. Interacts with sigma-NS; in viral factories. Interacts with the inner capsid proteins lambda-1 and sigma-2, and outer capsid protein lambda-2; in viral factories. Post-translationally, the N-terminus is blocked.

The protein localises to the host cytoplasm. In terms of biological role, non-structural protein implicated with protein sigma-NS in forming the matrix of viral factories, which are large inclusions in the host cytoplasm where replication intermediates are assembled and viral RNA replication takes place. Together with mu-2, recruits the other core proteins to these factories. The protein is Protein mu-NS (M3) of Mammalia (T2J).